Consider the following 817-residue polypeptide: Collagen-like protein 4 (817 aa).

3 Collagen-like domains span residues 83-142 (GDTG…KGQD), 145-264 (GSKG…KGDD), and 268-327 (GIQG…KGLK). Disordered regions lie at residues 87 to 107 (NKGEIGDNGENGDIGQIGDNG), 120 to 458 (FNGS…DKGD), and 479 to 543 (IIGD…KGDI). Residues Asn106 and Asn121 are each glycosylated (N-linked (GlcNAc...) asparagine; by host). 2 stretches are compositionally biased toward basic and acidic residues: residues 126-141 (IKGDKGTDGIKGDKGQ) and 149-161 (QKGETGSKGDDGI). Asn183 is a glycosylation site (N-linked (GlcNAc...) asparagine; by host). Composition is skewed to basic and acidic residues over residues 212–224 (IKGDPGNKGEDGI) and 233–245 (SKGETGSKGDDGT). Residues 246-260 (KGITGLKGTKGNSGS) show a composition bias toward low complexity. Residues 294–341 (KGSDGDKGNKGLDGIKGDLGDDGIKGDKGIKGLKGDTGNSDKGDKGSK) show a composition bias toward basic and acidic residues. Residues Asn345 and Asn360 are each glycosylated (N-linked (GlcNAc...) asparagine; by host). Collagen-like domains follow at residues 352–411 (GDKG…KGLV) and 430–489 (GDKG…KGIK). 3 stretches are compositionally biased toward basic and acidic residues: residues 354-368 (KGSKGDNGSKGESGD), 377-390 (SKGDIGDKGEKGDL), and 428-458 (SKGDKGESGDKGDIGIKGDKGAKGVTGDKGD). The span at 480 to 494 (IGDNGSKGIKGSSNN) shows a compositional bias: low complexity. A glycan (N-linked (GlcNAc...) asparagine; by host) is linked at Asn483. 3 stretches are compositionally biased toward basic and acidic residues: residues 495–504 (KGDKGDKGNT), 515–525 (IKGDKGIKGSK), and 533–543 (EKGEKGTKGDI). Residues 512–570 (TKGIKGDKGIKGSKGDLGSVGEKGEKGTKGDIGTKGETGLKGIIGDKGELGSKGIKGLS) form the Collagen-like 6 domain. Residues Asn709, Asn712, and Asn715 are each glycosylated (N-linked (GlcNAc...) asparagine; by host). A compositionally biased stretch (gly residues) spans 757 to 771 (GGGGASAFGNGGRGG). The disordered stretch occupies residues 757 to 804 (GGGGASAFGNGGRGGNTTQAATKGEYGSGGGGGSEFSPSGSTNGGDGG). An N-linked (GlcNAc...) asparagine; by host glycan is attached at Asn772.

May be hydroxylated on lysine by the viral-encoded procollagen-lysine,2-oxoglutarate 5-dioxygenase.

The protein resides in the virion. Its function is as follows. May participate in the formation of a layer of cross-linked glycosylated fibrils at the viral surface thus giving it a hairy-like appearance. The chain is Collagen-like protein 4 from Acanthamoeba polyphaga (Amoeba).